Here is a 199-residue protein sequence, read N- to C-terminus: Copper transport protein CTR4 (199 aa).

Helical transmembrane passes span 62 to 82 (KGMFAGSIIGIFFLCVLIELI) and 152 to 172 (AFFVMLLGMYFNVIVLIFIFL).

This sequence belongs to the copper transporter (Ctr) (TC 1.A.56) family. SLC31A subfamily.

It localises to the membrane. Its function is as follows. Required for high affinity copper (probably reduced Cu I) transport into the cell. Plays a role in fungal pathogenesis during host infection. The sequence is that of Copper transport protein CTR4 from Cryptococcus neoformans var. grubii serotype A (strain H99 / ATCC 208821 / CBS 10515 / FGSC 9487) (Filobasidiella neoformans var. grubii).